Consider the following 278-residue polypeptide: Pantothenate synthetase (278 aa).

27-34 (MGYLHEGH) is an ATP binding site. The Proton donor role is filled by His-34. Gln-58 serves as a coordination point for (R)-pantoate. Gln-58 is a beta-alanine binding site. 144 to 147 (GQKD) serves as a coordination point for ATP. Gln-150 is a binding site for (R)-pantoate. ATP-binding positions include Val-173 and 181-184 (MSSR).

The protein belongs to the pantothenate synthetase family. In terms of assembly, homodimer.

Its subcellular location is the cytoplasm. It catalyses the reaction (R)-pantoate + beta-alanine + ATP = (R)-pantothenate + AMP + diphosphate + H(+). The protein operates within cofactor biosynthesis; (R)-pantothenate biosynthesis; (R)-pantothenate from (R)-pantoate and beta-alanine: step 1/1. Its function is as follows. Catalyzes the condensation of pantoate with beta-alanine in an ATP-dependent reaction via a pantoyl-adenylate intermediate. The polypeptide is Pantothenate synthetase (Roseiflexus castenholzii (strain DSM 13941 / HLO8)).